The sequence spans 248 residues: Probable transcriptional regulatory protein Syncc9902_0542 (248 aa).

It belongs to the TACO1 family.

It is found in the cytoplasm. In Synechococcus sp. (strain CC9902), this protein is Probable transcriptional regulatory protein Syncc9902_0542.